The primary structure comprises 382 residues: L-lysine 4-hydroxylase (382 aa).

Fe cation-binding residues include His-182, Glu-184, and His-318.

It belongs to the clavaminate synthase family. Requires Fe(2+) as cofactor.

The enzyme catalyses L-lysine + 2-oxoglutarate + O2 = (4R)-4-hydroxy-L-lysine + succinate + CO2. Its function is as follows. Alpha-ketoglutarate-dependent dioxygenase that in vitro catalyzes the regio- and stereoselective hydroxylation of L-lysine, leading to (4R)-4-hydroxy-L-lysine. Cannot use D-lysine or L-ornithine as substrate. This is L-lysine 4-hydroxylase from Chitinophaga pinensis (strain ATCC 43595 / DSM 2588 / LMG 13176 / NBRC 15968 / NCIMB 11800 / UQM 2034).